A 259-amino-acid chain; its full sequence is Protein FAM220A (259 aa).

Interacts with transcriptional activator STAT3; the interaction occurs in both the nucleus and the cytoplasm, is enhanced by IL6 and promotes STAT3 dephosphorylation, leading to negative regulation of STAT3 transcriptional activator activity. Can interact with both unphosphorylated and phosphorylated STAT3 but interacts preferentially with phosphorylated STAT3 in the nucleus. Interacts with protein phosphatase PTPN2/TC45; this promotes interaction of PTPN2 with STAT3, leading to dephosphorylation of STAT3 by PTPN2.

The protein localises to the nucleus. It localises to the cytoplasm. Its subcellular location is the cytoplasmic vesicle. It is found in the secretory vesicle. The protein resides in the acrosome. Its function is as follows. Promotes dephosphorylation of transcriptional activator STAT3 by interacting with both STAT3 and protein phosphatase PTPN2. This promotes interaction of PTPN2 with STAT3 and mediates STAT3 dephosphorylation by PTPN2, leading to negative regulation of STAT3 transcriptional activator activity. May be required for spermiogenesis or sperm function. This is Protein FAM220A (FAM220A) from Macaca fascicularis (Crab-eating macaque).